Reading from the N-terminus, the 178-residue chain is Putative metal-dependent hydrolase GK0616 (178 aa).

The Zn(2+) site is built by H68, H161, and H165.

This sequence belongs to the metal hydrolase YfiT family. In terms of assembly, homodimer. Zn(2+) is required as a cofactor.

The protein resides in the cytoplasm. Its function is as follows. Possible metal-dependent hydrolase. The protein is Putative metal-dependent hydrolase GK0616 of Geobacillus kaustophilus (strain HTA426).